The chain runs to 817 residues: MDRLPLPHALHVPTHRPFAAPLPPRRLLARLAALMLCGVPLAVLAQAQPSQDAAPAEPPPALRSSPRLQEVLPYGIRQQLPVFVRGDRVTGQPDIQATIEGNAELRRGDTVVHADRMQYDVADDRARASGNVLINRAGNRYEGSQLDLRVEAFTGFFSDARYRFLETAAHGQASRVDFLDRDRSVVHNATYTTCERTDEASWQPDWILRAERIHLDRVEDVGTAENGVLEFKGVPVLPIPRITFPLSDRRKSGLLPPTLGLDSVSGFEYAQPYYWNIAPNRDATITPTVMTRRGVALGTEFRYLEPRYSGELTADYMPNDRLRDRDRWAYGIKHRATFDTPAGGVGLGIDIKRVSDDNYWRDFSQRNSGRSGVNDQLTQRLLPGDATLNWARGEHSLLLRTLKWQTLQDVNAPIIPPYDRMPQLRWEYRPLQLAGGLDASVEADYTSFHADRAYTGQPNAKRSYTMAQVSRPFLAPAGFITPRVQLHSTHYEFDAPLANGQRTASRTLPTFSLDSGLVFERDARYFGRDFLQTLEPRAFYTYTPYRDQRLLPIYDTAVNDFNFASIYTENAFGGQDRLADNNLLTLGVTTRLLDPDTGAEAARFGVAQRVRFSDQEVTMPGGSPVNERLSDVLLGAGINWTPQWGFDSTVQYNPKTGRSLRTTVGARYSPGNYRTVSAAYRMQKVTGLITEPSEQIDVGWQWPLNDLWGDRGDKPSSAGGRWYSVGRLNYSLQDRKLVDTVVGLEYESCCWIGRVVLERLQRSVTSSNTRLMFQIEFIGFSRLSLGSNPLSSLKQNVPRYQFLRESVSTPSRFTQYD.

Positions 1–45 (MDRLPLPHALHVPTHRPFAAPLPPRRLLARLAALMLCGVPLAVLA) are cleaved as a signal peptide.

Belongs to the LptD family. Component of the lipopolysaccharide transport and assembly complex. Interacts with LptE and LptA.

The protein localises to the cell outer membrane. In terms of biological role, together with LptE, is involved in the assembly of lipopolysaccharide (LPS) at the surface of the outer membrane. The protein is LPS-assembly protein LptD of Acidovorax sp. (strain JS42).